A 337-amino-acid polypeptide reads, in one-letter code: RNA 3'-terminal phosphate cyclase (337 aa).

ATP-binding positions include Gln-101 and 282-285; that span reads HMSD. Residue His-306 is the Tele-AMP-histidine intermediate of the active site.

Belongs to the RNA 3'-terminal cyclase family. Type 1 subfamily.

It is found in the cytoplasm. It carries out the reaction a 3'-end 3'-phospho-ribonucleotide-RNA + ATP = a 3'-end 2',3'-cyclophospho-ribonucleotide-RNA + AMP + diphosphate. Functionally, catalyzes the conversion of 3'-phosphate to a 2',3'-cyclic phosphodiester at the end of RNA. The mechanism of action of the enzyme occurs in 3 steps: (A) adenylation of the enzyme by ATP; (B) transfer of adenylate to an RNA-N3'P to produce RNA-N3'PP5'A; (C) and attack of the adjacent 2'-hydroxyl on the 3'-phosphorus in the diester linkage to produce the cyclic end product. The biological role of this enzyme is unknown but it is likely to function in some aspects of cellular RNA processing. The sequence is that of RNA 3'-terminal phosphate cyclase from Saccharolobus islandicus (strain M.16.4 / Kamchatka #3) (Sulfolobus islandicus).